Reading from the N-terminus, the 568-residue chain is Pyruvate carboxylase subunit B (568 aa).

Residues 4-264 (IKVVETAFRD…DTGLDLEILK (261 aa)) form the Pyruvate carboxyltransferase domain. Substrate is bound by residues 12–16 (RDAHQ) and R83. D13 is a binding site for a divalent metal cation. A divalent metal cation is bound by residues K174, H203, and H205. K174 is modified (N6-carboxylysine). T339 is a substrate binding site. A Biotinyl-binding domain is found at 493–568 (PEPVDVEGAV…ETGDIIMVIK (76 aa)). Residue K534 is modified to N6-biotinyllysine.

As to quaternary structure, heterooctamer of four A and four B subunits. Requires Mg(2+) as cofactor. The cofactor is Mn(2+). Co(2+) is required as a cofactor.

It catalyses the reaction hydrogencarbonate + pyruvate + ATP = oxaloacetate + ADP + phosphate + H(+). With respect to regulation, inhibited by ADP and alpha-ketoglutarate. Pyruvate carboxylase catalyzes a 2-step reaction, involving the ATP-dependent carboxylation of the covalently attached biotin in the first step and the transfer of the carboxyl group to pyruvate in the second. In Methanothermobacter thermautotrophicus (strain ATCC 29096 / DSM 1053 / JCM 10044 / NBRC 100330 / Delta H) (Methanobacterium thermoautotrophicum), this protein is Pyruvate carboxylase subunit B (pycB).